The following is an 86-amino-acid chain: MQLKIQLLMLVLMTVLTGVLGKDGYVVHEDTNCKYSCDVFKKWKYCSPLCQKKGAETGYCYSFACWCVGLPEETLVYGDKGTYCWE.

A signal peptide spans 1–21 (MQLKIQLLMLVLMTVLTGVLG). Positions 22–85 (KDGYVVHEDT…VYGDKGTYCW (64 aa)) constitute an LCN-type CS-alpha/beta domain. 4 disulfides stabilise this stretch: cysteine 33–cysteine 84, cysteine 37–cysteine 60, cysteine 46–cysteine 65, and cysteine 50–cysteine 67.

This sequence belongs to the long (4 C-C) scorpion toxin superfamily. Sodium channel inhibitor family. Alpha subfamily. As to expression, expressed by the venom gland.

The protein localises to the secreted. Functionally, binds voltage-independently at site-3 of voltage-gated sodium channels (Nav) and inhibits the inactivation of the activated channels, thereby blocking neuronal transmission. The polypeptide is Neurotoxin LmNaTx35.2 (Lychas mucronatus (Chinese swimming scorpion)).